Reading from the N-terminus, the 448-residue chain is Fumarate hydratase class II (448 aa).

Substrate contacts are provided by residues 83 to 85, 113 to 116, 123 to 125, and Thr-171; these read SGT, HPND, and SSN. The active-site Proton donor/acceptor is His-172. Residue Ser-302 is part of the active site. Substrate is bound by residues Ser-303 and 308 to 310; that span reads KVN.

This sequence belongs to the class-II fumarase/aspartase family. Fumarase subfamily. In terms of assembly, homotetramer.

The protein resides in the cytoplasm. The enzyme catalyses (S)-malate = fumarate + H2O. It functions in the pathway carbohydrate metabolism; tricarboxylic acid cycle; (S)-malate from fumarate: step 1/1. Involved in the TCA cycle. Catalyzes the stereospecific interconversion of fumarate to L-malate. The sequence is that of Fumarate hydratase class II from Blochmanniella floridana.